Reading from the N-terminus, the 254-residue chain is Imidazole glycerol phosphate synthase subunit HisF (254 aa).

Active-site residues include aspartate 13 and aspartate 132.

Belongs to the HisA/HisF family. Heterodimer of HisH and HisF.

It is found in the cytoplasm. The catalysed reaction is 5-[(5-phospho-1-deoxy-D-ribulos-1-ylimino)methylamino]-1-(5-phospho-beta-D-ribosyl)imidazole-4-carboxamide + L-glutamine = D-erythro-1-(imidazol-4-yl)glycerol 3-phosphate + 5-amino-1-(5-phospho-beta-D-ribosyl)imidazole-4-carboxamide + L-glutamate + H(+). It participates in amino-acid biosynthesis; L-histidine biosynthesis; L-histidine from 5-phospho-alpha-D-ribose 1-diphosphate: step 5/9. In terms of biological role, IGPS catalyzes the conversion of PRFAR and glutamine to IGP, AICAR and glutamate. The HisF subunit catalyzes the cyclization activity that produces IGP and AICAR from PRFAR using the ammonia provided by the HisH subunit. In Nautilia profundicola (strain ATCC BAA-1463 / DSM 18972 / AmH), this protein is Imidazole glycerol phosphate synthase subunit HisF.